Consider the following 721-residue polypeptide: uncharacterized protein (721 aa).

Disordered regions lie at residues 196-291 (TSMT…VGGP) and 370-513 (AGIP…AAEQ). Composition is skewed to low complexity over residues 202-224 (SPAG…TSGP) and 232-250 (SPFG…SSGP). 2 stretches are compositionally biased toward pro residues: residues 264–283 (PMPP…PPSA) and 379–389 (APTPSPAPIAP). A compositionally biased stretch (low complexity) spans 419–429 (APAGPLPAYGA). The span at 435–446 (VTTPPATPPTPT) shows a compositional bias: pro residues. The segment covering 470–484 (VNKSTAPATTQAQPS) has biased composition (polar residues). The span at 491–505 (ASATAAATTGAAAGD) shows a compositional bias: low complexity.

This is an uncharacterized protein from Mycobacterium tuberculosis (strain ATCC 25618 / H37Rv).